Consider the following 882-residue polypeptide: Alanine--tRNA ligase (882 aa).

4 residues coordinate Zn(2+): His570, His574, Cys672, and His676.

Belongs to the class-II aminoacyl-tRNA synthetase family. Zn(2+) serves as cofactor.

It localises to the cytoplasm. The catalysed reaction is tRNA(Ala) + L-alanine + ATP = L-alanyl-tRNA(Ala) + AMP + diphosphate. Its function is as follows. Catalyzes the attachment of alanine to tRNA(Ala) in a two-step reaction: alanine is first activated by ATP to form Ala-AMP and then transferred to the acceptor end of tRNA(Ala). Also edits incorrectly charged Ser-tRNA(Ala) and Gly-tRNA(Ala) via its editing domain. This Xanthomonas oryzae pv. oryzae (strain MAFF 311018) protein is Alanine--tRNA ligase.